The chain runs to 597 residues: DNA import protein CedB (597 aa).

A helical membrane pass occupies residues 10-30 (VVLLILGIISFNLVFIILAII). 286–293 (GPTGSGKT) is an ATP binding site.

The protein localises to the cell membrane. In terms of biological role, part of the Ced system, which is involved in DNA import. This is DNA import protein CedB from Sulfolobus acidocaldarius (strain ATCC 33909 / DSM 639 / JCM 8929 / NBRC 15157 / NCIMB 11770).